The primary structure comprises 247 residues: Probable chemoreceptor glutamine deamidase CheD (247 aa).

Residues 204–247 form a disordered region; it reads KRPAAPQPARPRIELFGGRGTAPGAGSPSAGSPYAANLSRKQEA. The segment covering 227-239 has biased composition (low complexity); the sequence is GAGSPSAGSPYAA.

This sequence belongs to the CheD family.

The catalysed reaction is L-glutaminyl-[protein] + H2O = L-glutamyl-[protein] + NH4(+). Probably deamidates glutamine residues to glutamate on methyl-accepting chemotaxis receptors (MCPs), playing an important role in chemotaxis. This chain is Probable chemoreceptor glutamine deamidase CheD, found in Burkholderia orbicola (strain AU 1054).